A 469-amino-acid chain; its full sequence is Trigger factor (469 aa).

The PPIase FKBP-type domain occupies 165–250 (GDCVTIDYLG…VKAISKPDEL (86 aa)). Over residues 439 to 460 (EYDESDLTEKKPEKKKGVEKTP) the composition is skewed to basic and acidic residues. The tract at residues 439–469 (EYDESDLTEKKPEKKKGVEKTPIRKKAPKKG) is disordered.

It belongs to the FKBP-type PPIase family. Tig subfamily.

The protein resides in the cytoplasm. It catalyses the reaction [protein]-peptidylproline (omega=180) = [protein]-peptidylproline (omega=0). Involved in protein export. Acts as a chaperone by maintaining the newly synthesized protein in an open conformation. Functions as a peptidyl-prolyl cis-trans isomerase. The polypeptide is Trigger factor (Bartonella quintana (strain Toulouse) (Rochalimaea quintana)).